The chain runs to 491 residues: Ketol-acid reductoisomerase (NADP(+)) (491 aa).

Residues 15–208 (AQLGKCRFMA…GGHRAGVLES (194 aa)) form the KARI N-terminal Rossmann domain. Residues 45–48 (CGAQ), Arg68, Arg76, Ser78, and 108–110 (DKQ) each bind NADP(+). The active site involves His132. Gly158 contributes to the NADP(+) binding site. 2 consecutive KARI C-terminal knotted domains span residues 209–344 (SFVA…TASQ) and 345–484 (FDGK…MKDM). Residues Asp217, Glu221, Glu389, and Glu393 each coordinate Mg(2+). A substrate-binding site is contributed by Ser414.

It belongs to the ketol-acid reductoisomerase family. The cofactor is Mg(2+).

It carries out the reaction (2R)-2,3-dihydroxy-3-methylbutanoate + NADP(+) = (2S)-2-acetolactate + NADPH + H(+). The catalysed reaction is (2R,3R)-2,3-dihydroxy-3-methylpentanoate + NADP(+) = (S)-2-ethyl-2-hydroxy-3-oxobutanoate + NADPH + H(+). It participates in amino-acid biosynthesis; L-isoleucine biosynthesis; L-isoleucine from 2-oxobutanoate: step 2/4. The protein operates within amino-acid biosynthesis; L-valine biosynthesis; L-valine from pyruvate: step 2/4. Functionally, involved in the biosynthesis of branched-chain amino acids (BCAA). Catalyzes an alkyl-migration followed by a ketol-acid reduction of (S)-2-acetolactate (S2AL) to yield (R)-2,3-dihydroxy-isovalerate. In the isomerase reaction, S2AL is rearranged via a Mg-dependent methyl migration to produce 3-hydroxy-3-methyl-2-ketobutyrate (HMKB). In the reductase reaction, this 2-ketoacid undergoes a metal-dependent reduction by NADPH to yield (R)-2,3-dihydroxy-isovalerate. The protein is Ketol-acid reductoisomerase (NADP(+)) of Enterobacter sp. (strain 638).